The chain runs to 411 residues: Z-DNA-binding protein 1 (411 aa).

2 Z-binding domains span residues 8-70 (LSTG…SIGG) and 84-148 (SSAQ…HSRQ). Residues K17 and K43 each participate in a glycyl lysine isopeptide (Lys-Gly) (interchain with G-Cter in ubiquitin) cross-link. Positions 60-86 (SPEPATWSIGGAASGDGAPAIPENSSA) are disordered. Short sequence motifs (RIP homotypic interaction motif (RHIM)) lie at residues 188 to 205 (NSNA…REKA) and 237 to 261 (YIYM…LVGD). Disordered stretches follow at residues 263 to 303 (GKHP…EGDT) and 332 to 411 (KGEV…LSKQ). Composition is skewed to polar residues over residues 268–292 (YSFS…NMQT), 350–371 (GTSS…SMLP), and 400–411 (IESSQDTGLSKQ).

As to quaternary structure, homodimer. Interacts (via RIP homotypic interaction motif) with RIPK3; leading to RIPK3 activation and necroptosis; interaction is enhanced by CASP6. Interacts (via RIP homotypic interaction motif) with RIPK1. Component of the AIM2 PANoptosome complex, a multiprotein complex that drives inflammatory cell death (PANoptosis). In terms of assembly, (Microbial infection) Interacts (via RIP homotypic interaction motif) with murid herpesvirus protein RIR1 (via RIP homotypic interaction motif); leading to inhibition of ZBP1-dependent necroptosis. (Microbial infection) Interacts with vaccinia virus E3 protein; leading to inhibit ZBP1-dependent necroptosis. Post-translationally, ubiquitinated; polyubiquitinated following influenza A virus (IAV) infection. Phosphorylated. As to expression, expressed in lung, spleen and liver. Lower levels were seen in heart, kidney and testis. Expression is greatly up-regulated in tumor stromal cells and activated macrophages.

The protein localises to the cytoplasm. Its subcellular location is the nucleus. Its activity is regulated as follows. ZBP1-dependent necroptosis is normally inhibited by RIPK1: RIPK1 inhibits the ZBP1-induced activation of RIPK3 via FADD-mediated recruitment of CASP8, which cleaves RIPK1 and limits TNF-induced necroptosis. Key innate sensor that recognizes and binds Z-RNA structures, which are produced by a number of viruses, such as herpesvirus, orthomyxovirus or flavivirus, and triggers different forms of cell death. ZBP1 acts as an essential mediator of pyroptosis, necroptosis and apoptosis (PANoptosis), an integral part of host defense against pathogens, by activating RIPK3, caspase-8 (CASP8), and the NLRP3 inflammasome. Key activator of necroptosis, a programmed cell death process in response to death-inducing TNF-alpha family members, via its ability to bind Z-RNA: once activated upon Z-RNA-binding, ZBP1 interacts and stimulates RIPK3 kinase, which phosphorylates and activates MLKL, triggering execution of programmed necrosis. In addition to TNF-induced necroptosis, necroptosis can also take place in the nucleus in response to orthomyxoviruses infection: ZBP1 recognizes and binds Z-RNA structures that are produced in infected nuclei by orthomyxoviruses, such as the influenza A virus (IAV), leading to ZBP1 activation, RIPK3 stimulation and subsequent MLKL phosphorylation, triggering disruption of the nuclear envelope and leakage of cellular DNA into the cytosol. ZBP1-dependent cell death in response to IAV infection promotes interleukin-1 alpha (IL1A) induction in an NLRP3-inflammasome-independent manner: IL1A expression is required for the optimal interleukin-1 beta (IL1B) production, and together, these cytokines promote infiltration of inflammatory neutrophils to the lung, leading to the formation of neutrophil extracellular traps. In addition to its direct role in driving necroptosis via its ability to sense Z-RNAs, also involved in PANoptosis triggered in response to bacterial infection: component of the AIM2 PANoptosome complex, a multiprotein complex that triggers PANoptosis. Also acts as the apical sensor of fungal infection responsible for activating PANoptosis. Involved in CASP8-mediated cell death via its interaction with RIPK1 but independently of its ability to sense Z-RNAs. In some cell types, also able to restrict viral replication by promoting cell death-independent responses. In response to flavivirus infection in neurons, promotes a cell death-independent pathway that restricts viral replication: together with RIPK3, promotes a death-independent transcriptional program that modifies the cellular metabolism via up-regulation expression of the enzyme ACOD1/IRG1 and production of the metabolite itaconate. Itaconate inhibits the activity of succinate dehydrogenase, generating a metabolic state in neurons that suppresses replication of viral genomes. The sequence is that of Z-DNA-binding protein 1 from Mus musculus (Mouse).